The following is a 508-amino-acid chain: Photosystem II CP47 reaction center protein (508 aa).

Transmembrane regions (helical) follow at residues 21 to 36 (SVHIMHTALVSGWAGS), 101 to 115 (IVFSGLCFLASIWHW), 140 to 156 (GIHLFLSGVACFGFGAF), 203 to 218 (IAAGTLGILAGLFHLS), 237 to 252 (VLSSSIAAVFFAAFIV), and 457 to 472 (SFALLFFFGHIWHGAR).

Belongs to the PsbB/PsbC family. PsbB subfamily. PSII is composed of 1 copy each of membrane proteins PsbA, PsbB, PsbC, PsbD, PsbE, PsbF, PsbH, PsbI, PsbJ, PsbK, PsbL, PsbM, PsbT, PsbX, PsbY, PsbZ, Psb30/Ycf12, at least 3 peripheral proteins of the oxygen-evolving complex and a large number of cofactors. It forms dimeric complexes. Binds multiple chlorophylls. PSII binds additional chlorophylls, carotenoids and specific lipids. serves as cofactor.

It localises to the plastid. The protein resides in the chloroplast thylakoid membrane. Functionally, one of the components of the core complex of photosystem II (PSII). It binds chlorophyll and helps catalyze the primary light-induced photochemical processes of PSII. PSII is a light-driven water:plastoquinone oxidoreductase, using light energy to abstract electrons from H(2)O, generating O(2) and a proton gradient subsequently used for ATP formation. The polypeptide is Photosystem II CP47 reaction center protein (Amborella trichopoda).